Reading from the N-terminus, the 398-residue chain is Phosphoglycerate kinase (398 aa).

Substrate contacts are provided by residues 22 to 24 (DFN), Arg38, 61 to 64 (HLGR), Arg120, and Arg153. Residues Lys206, Gly297, Glu328, and 354–357 (GGDT) each bind ATP.

It belongs to the phosphoglycerate kinase family. In terms of assembly, monomer.

Its subcellular location is the cytoplasm. It catalyses the reaction (2R)-3-phosphoglycerate + ATP = (2R)-3-phospho-glyceroyl phosphate + ADP. It functions in the pathway carbohydrate degradation; glycolysis; pyruvate from D-glyceraldehyde 3-phosphate: step 2/5. This chain is Phosphoglycerate kinase, found in Nautilia profundicola (strain ATCC BAA-1463 / DSM 18972 / AmH).